A 256-amino-acid polypeptide reads, in one-letter code: F-actin-capping protein subunit alpha (256 aa).

At S31 the chain carries Phosphoserine.

Belongs to the F-actin-capping protein alpha subunit family. Component of the F-actin capping complex, composed of a heterodimer of an alpha and a beta subunit.

It localises to the cytoplasm. The protein resides in the cytoskeleton. Its subcellular location is the actin patch. In terms of biological role, F-actin-capping proteins bind in a Ca(2+)-independent manner to the fast growing ends of actin filaments (barbed end) thereby blocking the exchange of subunits at these ends. Unlike other capping proteins (such as gelsolin and severin), these proteins do not sever actin filaments. Competes with formin cdc12 for attachment to the actin filaments barbed ends. Slowly replaces cdc12 on the barbed ends in preparation for filament disassembly during contractile ring constriction. The protein is F-actin-capping protein subunit alpha (acp1) of Schizosaccharomyces pombe (strain 972 / ATCC 24843) (Fission yeast).